Reading from the N-terminus, the 386-residue chain is F420 non-reducing hydrogenase II small subunit (386 aa).

Positions 1–51 (MVEMSTGMKNLTRTLESMDFLKMDRRTFMKAVSALGATAFLGTYQTEIVNA) form a signal peptide, tat-type signal. [4Fe-4S] cluster contacts are provided by C67, C70, C178, C227, H273, C276, C296, and C302. 3 residues coordinate [3Fe-4S] cluster: C311, C330, and C333.

The protein belongs to the [NiFe]/[NiFeSe] hydrogenase small subunit family. In terms of assembly, composed of a large subunit (VhtA), a small subunit (VhtG) and a cytochrome subunit (VhtC). The cofactor is [4Fe-4S] cluster. [3Fe-4S] cluster is required as a cofactor. In terms of processing, predicted to be exported by the Tat system. The position of the signal peptide cleavage has not been experimentally proven.

It is found in the cell membrane. The catalysed reaction is methanophenazine + H2 = dihydromethanophenazine. Functionally, part of the F420 non-reducing hydrogenase II complex that catalyzes the reduction of methanophenazine to dihydromethanophenazine. The chain is F420 non-reducing hydrogenase II small subunit from Methanosarcina mazei (strain ATCC BAA-159 / DSM 3647 / Goe1 / Go1 / JCM 11833 / OCM 88) (Methanosarcina frisia).